Consider the following 305-residue polypeptide: N-acetylneuraminate lyase (305 aa).

Positions 51 and 52 each coordinate aceneuramate. Residue tyrosine 143 is the Proton donor of the active site. The Schiff-base intermediate with substrate role is filled by lysine 173. Positions 175, 197, 199, 200, and 216 each coordinate aceneuramate.

Belongs to the DapA family. NanA subfamily. As to quaternary structure, homotetramer.

It is found in the cytoplasm. The enzyme catalyses aceneuramate = aldehydo-N-acetyl-D-mannosamine + pyruvate. Its pathway is amino-sugar metabolism; N-acetylneuraminate degradation. Functionally, catalyzes the cleavage of N-acetylneuraminic acid (sialic acid) to form pyruvate and N-acetylmannosamine via a Schiff base intermediate. It prevents sialic acids from being recycled and returning to the cell surface. Involved in the N-glycolylneuraminic acid (Neu5Gc) degradation pathway. The chain is N-acetylneuraminate lyase from Xenopus tropicalis (Western clawed frog).